A 140-amino-acid chain; its full sequence is uncharacterized protein (140 aa).

This is an uncharacterized protein from Homo sapiens (Human).